The sequence spans 106 residues: MHLERSVQSQLTESKEIARPYSLWGISLAQHSFKTSTRSTGKKRSKGSTSQDGKKQESLESRNDLGPTIVGLIRKILSYSSKKEFSNLTGLESGGSSPPFSLAVSK.

2 disordered regions span residues 33-64 and 87-106; these read FKTS…SRND and NLTG…AVSK. Residues 52 to 63 show a composition bias toward basic and acidic residues; that stretch reads DGKKQESLESRN. A compositionally biased stretch (polar residues) spans 87–99; that stretch reads NLTGLESGGSSPP.

The protein localises to the mitochondrion. This is an uncharacterized protein from Arabidopsis thaliana (Mouse-ear cress).